Consider the following 258-residue polypeptide: Rho-related GTP-binding protein RhoU (258 aa).

Residues 1-45 are disordered; it reads MPPQQGDPAFPDRCEAPPVPPRRERGGRGGRGPGEPGGRGRAGGA. Over residues 10–27 the composition is skewed to basic and acidic residues; the sequence is FPDRCEAPPVPPRRERGG. Gly residues predominate over residues 29–45; sequence GGRGPGEPGGRGRAGGA. GTP is bound by residues 56–63, 103–107, and 161–164; these read GDGAVGKT, DTAGQ, and TQSD. Residues lysine 177 and lysine 248 each participate in a glycyl lysine isopeptide (Lys-Gly) (interchain with G-Cter in ubiquitin) cross-link. Cysteine 256 carries the S-palmitoyl cysteine lipid modification.

Belongs to the small GTPase superfamily. Rho family. In terms of assembly, interacts with PAK1. Interacts with PAK3. Interacts with ARHGAP30 in a GTP-independent manner. In its GTP-loaded conformation, interacts with ARHGAP31. Interacts with PTK2B/PYK2. Interacts with PAK4; the interaction is PAK4 kinase activity-independent and protects RHOU from ubiquitination. The cofactor is Mg(2+). Post-translationally, ubiquitinated. 'Lys-48'-linked ubiquitination at Lys-177 and Lys-248 by the ECS(RAB40A) complex leading to its degradation. In terms of processing, tyrosine phosphorylated by SRC in response to PTK2B/PYK2 activation. In terms of tissue distribution, ubiquitously expressed in all tissues examined. Expressed at high levels in the stomach, small intestine, brain, skeletal muscle and placenta.

Its subcellular location is the cell membrane. It is found in the golgi apparatus membrane. It localises to the cell junction. The protein localises to the focal adhesion. The protein resides in the cell projection. Its subcellular location is the podosome. Functionally, binds to and activates protein kinase PAK1. Plays a role in the regulation of cell morphology, cytoskeletal organization and focal adhesion assembly during cell migration. Also stimulates quiescent cells to reenter the cell cycle. Has no detectable GTPase activity but its high intrinsic guanine nucleotide exchange activity suggests it is constitutively GTP-bound. This Homo sapiens (Human) protein is Rho-related GTP-binding protein RhoU.